The primary structure comprises 342 residues: Putative glycosyltransferases (342 aa).

The next 2 membrane-spanning stretches (helical) occupy residues 227-247 (IFYL…YLII) and 262-282 (VIVS…LVGI).

This sequence belongs to the glycosyltransferase 2 family.

It is found in the cell membrane. May play only a redundant role in maintaining cell wall viability and bacterial virulence. In Mycobacterium tuberculosis (strain CDC 1551 / Oshkosh), this protein is Putative glycosyltransferases (pimF).